The primary structure comprises 476 residues: Protein DETOXIFICATION 1 (476 aa).

A run of 12 helical transmembrane segments spans residues 35-55 (AAPM…SVMV), 66-86 (GVAL…CGLV), 117-137 (IPIC…LISL), 146-166 (IAGS…IVIP), 184-204 (AVTT…LFGL), 208-228 (GPAM…SCYV), 260-280 (AAMI…SGLL), 289-309 (VLSI…GVAA), 331-351 (VLAG…LLFT), 370-390 (VADL…TAVL), 402-422 (IGAW…GIYL), and 433-453 (LWCG…IVTA).

It belongs to the multi antimicrobial extrusion (MATE) (TC 2.A.66.1) family. In terms of tissue distribution, ubiquitous. Highest expression in flowers and stems.

Its subcellular location is the cell membrane. In terms of biological role, efflux carrier for plant-derived alkaloids, antibiotics, heavy metal and other toxic compounds. Involved in cadmium detoxification. Requires probably a proton-motive force for the efflux. The protein is Protein DETOXIFICATION 1 of Arabidopsis thaliana (Mouse-ear cress).